The chain runs to 358 residues: DnaJ homolog subfamily C member 18 (358 aa).

Residues 82 to 146 (NYYEILGVSR…DKRLRYDEYG (65 aa)) form the J domain. The helical transmembrane segment at 228 to 248 (AFIQLLPVLVIVIISVITQLL) threads the bilayer.

It localises to the endoplasmic reticulum membrane. Its function is as follows. (Microbial infection) In case of infection by polyomavirus, involved in the virus endoplasmic reticulum membrane penetration and infection. Regulates the recruitment of DNAJB12:DNAJB14 into SV40-induced foci and all cooperate to guide SV40 across the endoplasmic reticulum membrane. The foci represent the site from which SV40 penetrates into the cytosol. This is DnaJ homolog subfamily C member 18 from Homo sapiens (Human).